The following is a 310-amino-acid chain: tRNA dimethylallyltransferase (310 aa).

10-17 (GPTAVGKS) is a binding site for ATP. Substrate is bound at residue 12 to 17 (TAVGKS). Residues 35 to 38 (DSMQ) form an interaction with substrate tRNA region.

This sequence belongs to the IPP transferase family. In terms of assembly, monomer. It depends on Mg(2+) as a cofactor.

The enzyme catalyses adenosine(37) in tRNA + dimethylallyl diphosphate = N(6)-dimethylallyladenosine(37) in tRNA + diphosphate. Functionally, catalyzes the transfer of a dimethylallyl group onto the adenine at position 37 in tRNAs that read codons beginning with uridine, leading to the formation of N6-(dimethylallyl)adenosine (i(6)A). This is tRNA dimethylallyltransferase from Clostridium perfringens (strain SM101 / Type A).